The chain runs to 124 residues: Large ribosomal subunit protein bL12 (124 aa).

This sequence belongs to the bacterial ribosomal protein bL12 family. Homodimer. Part of the ribosomal stalk of the 50S ribosomal subunit. Forms a multimeric L10(L12)X complex, where L10 forms an elongated spine to which 2 to 4 L12 dimers bind in a sequential fashion. Binds GTP-bound translation factors.

Its function is as follows. Forms part of the ribosomal stalk which helps the ribosome interact with GTP-bound translation factors. Is thus essential for accurate translation. This chain is Large ribosomal subunit protein bL12, found in Burkholderia lata (strain ATCC 17760 / DSM 23089 / LMG 22485 / NCIMB 9086 / R18194 / 383).